The primary structure comprises 645 residues: Cytochrome c oxidase subunit 1 (645 aa).

Residues 8-28 (LNYFYFSMWTGLSGAALATMI) form a helical membrane-spanning segment. The Ca(2+) site is built by glutamate 31 and glycine 36. Histidine 54 serves as a coordination point for Fe(II)-heme a. Transmembrane regions (helical) follow at residues 56-76 (LIMV…NFLI), 90-110 (LNSI…KIAF), 247-267 (VLSV…LTLI), 282-302 (VLIP…AIVT), 337-357 (LFWF…FGVA), 376-396 (IWAV…HMYL), 410-430 (ITIM…LTLA), and 438-458 (LVFL…FTGM). Histidine 343 serves as a coordination point for Cu cation. Positions 343–347 (HPEVY) form a cross-link, 1'-histidyl-3'-tyrosine (His-Tyr). O2 is bound at residue tyrosine 347. Cu cation-binding residues include histidine 392 and histidine 393. Residues histidine 470 and aspartate 471 each coordinate Mg(2+). 3 consecutive transmembrane segments (helical) span residues 475–495 (VVAH…FTGL), 513–533 (FLHL…MFFL), and 555–575 (LASC…FGIF). Residue histidine 478 participates in heme a3 binding. Residue histidine 480 participates in Fe(II)-heme a binding.

It belongs to the heme-copper respiratory oxidase family. In terms of assembly, component of the cytochrome c oxidase (complex IV, CIV), a multisubunit enzyme composed of a catalytic core of 3 subunits and several supernumerary subunits. The complex exists as a monomer or a dimer and forms supercomplexes (SCs) in the inner mitochondrial membrane with ubiquinol-cytochrome c oxidoreductase (cytochrome b-c1 complex, complex III, CIII). Requires heme as cofactor. Cu cation serves as cofactor.

It localises to the mitochondrion inner membrane. The enzyme catalyses 4 Fe(II)-[cytochrome c] + O2 + 8 H(+)(in) = 4 Fe(III)-[cytochrome c] + 2 H2O + 4 H(+)(out). It functions in the pathway energy metabolism; oxidative phosphorylation. Functionally, component of the cytochrome c oxidase, the last enzyme in the mitochondrial electron transport chain which drives oxidative phosphorylation. The respiratory chain contains 3 multisubunit complexes succinate dehydrogenase (complex II, CII), ubiquinol-cytochrome c oxidoreductase (cytochrome b-c1 complex, complex III, CIII) and cytochrome c oxidase (complex IV, CIV), that cooperate to transfer electrons derived from NADH and succinate to molecular oxygen, creating an electrochemical gradient over the inner membrane that drives transmembrane transport and the ATP synthase. Cytochrome c oxidase is the component of the respiratory chain that catalyzes the reduction of oxygen to water. Electrons originating from reduced cytochrome c in the intermembrane space (IMS) are transferred via the dinuclear copper A center (CU(A)) of subunit 2 and heme A of subunit 1 to the active site in subunit 1, a binuclear center (BNC) formed by heme A3 and copper B (CU(B)). The BNC reduces molecular oxygen to 2 water molecules using 4 electrons from cytochrome c in the IMS and 4 protons from the mitochondrial matrix. The sequence is that of Cytochrome c oxidase subunit 1 (COI) from Paramecium tetraurelia.